The following is a 322-amino-acid chain: Fructose-1,6-bisphosphatase class 1 (322 aa).

4 residues coordinate Mg(2+): Glu-84, Asp-103, Leu-105, and Asp-106. Residues 106–109, Asn-198, and Lys-264 contribute to the substrate site; that span reads DGSS. Mg(2+) is bound at residue Glu-270.

This sequence belongs to the FBPase class 1 family. Homotetramer. Mg(2+) serves as cofactor.

The protein localises to the cytoplasm. The enzyme catalyses beta-D-fructose 1,6-bisphosphate + H2O = beta-D-fructose 6-phosphate + phosphate. Its pathway is carbohydrate biosynthesis; gluconeogenesis. This Saccharophagus degradans (strain 2-40 / ATCC 43961 / DSM 17024) protein is Fructose-1,6-bisphosphatase class 1.